We begin with the raw amino-acid sequence, 224 residues long: Mammalian ependymin-related protein 1 (224 aa).

A signal peptide spans 1–37; sequence MPGRAPLHTVPGALGPWLLGCLWAWTLCGLCSLGAVG. 3 disulfides stabilise this stretch: C42/C172, C88/C222, and C113/C210. N-linked (GlcNAc...) asparagine glycans are attached at residues N130 and N182.

It belongs to the ependymin family. Homodimer. Post-translationally, N-glycosylated; the glycan contains mannose-6-phosphate moieties.

It is found in the lysosome lumen. It localises to the secreted. Binds anionic lipids and gangliosides at acidic pH. The sequence is that of Mammalian ependymin-related protein 1 (EPDR1) from Macaca fascicularis (Crab-eating macaque).